The sequence spans 248 residues: 23S rRNA (guanosine-2'-O-)-methyltransferase RlmB (248 aa).

S-adenosyl-L-methionine contacts are provided by Gly-198, Leu-218, and Leu-227.

Belongs to the class IV-like SAM-binding methyltransferase superfamily. RNA methyltransferase TrmH family. RlmB subfamily.

The protein resides in the cytoplasm. It catalyses the reaction guanosine(2251) in 23S rRNA + S-adenosyl-L-methionine = 2'-O-methylguanosine(2251) in 23S rRNA + S-adenosyl-L-homocysteine + H(+). Functionally, specifically methylates the ribose of guanosine 2251 in 23S rRNA. The protein is 23S rRNA (guanosine-2'-O-)-methyltransferase RlmB of Pseudomonas aeruginosa (strain ATCC 15692 / DSM 22644 / CIP 104116 / JCM 14847 / LMG 12228 / 1C / PRS 101 / PAO1).